The primary structure comprises 339 residues: Anthranilate phosphoribosyltransferase (339 aa).

5-phospho-alpha-D-ribose 1-diphosphate contacts are provided by residues Gly81, 84–85 (GD), Ser89, 91–94 (NVSS), 109–117 (KHGNRALSS), and Ala121. Gly81 is a binding site for anthranilate. Position 93 (Ser93) interacts with Mg(2+). Position 112 (Asn112) interacts with anthranilate. Arg167 serves as a coordination point for anthranilate. Mg(2+) contacts are provided by Asp225 and Glu226.

This sequence belongs to the anthranilate phosphoribosyltransferase family. In terms of assembly, homodimer. Mg(2+) serves as cofactor.

It carries out the reaction N-(5-phospho-beta-D-ribosyl)anthranilate + diphosphate = 5-phospho-alpha-D-ribose 1-diphosphate + anthranilate. It functions in the pathway amino-acid biosynthesis; L-tryptophan biosynthesis; L-tryptophan from chorismate: step 2/5. In terms of biological role, catalyzes the transfer of the phosphoribosyl group of 5-phosphorylribose-1-pyrophosphate (PRPP) to anthranilate to yield N-(5'-phosphoribosyl)-anthranilate (PRA). This chain is Anthranilate phosphoribosyltransferase, found in Brucella abortus (strain S19).